The following is a 277-amino-acid chain: Phosphatidylglycerol--prolipoprotein diacylglyceryl transferase (277 aa).

The next 7 membrane-spanning stretches (helical) occupy residues 21 to 41, 60 to 80, 95 to 115, 124 to 144, 176 to 196, 203 to 223, and 239 to 259; these read LAVR…LWLA, LLFA…VLFY, VWTG…AMLW, FFTI…AGRL, SQLY…NWFI, GTVS…VEYV, and MGQI…LWAF. R143 is a binding site for a 1,2-diacyl-sn-glycero-3-phospho-(1'-sn-glycerol).

This sequence belongs to the Lgt family.

The protein localises to the cell inner membrane. It carries out the reaction L-cysteinyl-[prolipoprotein] + a 1,2-diacyl-sn-glycero-3-phospho-(1'-sn-glycerol) = an S-1,2-diacyl-sn-glyceryl-L-cysteinyl-[prolipoprotein] + sn-glycerol 1-phosphate + H(+). It functions in the pathway protein modification; lipoprotein biosynthesis (diacylglyceryl transfer). Its function is as follows. Catalyzes the transfer of the diacylglyceryl group from phosphatidylglycerol to the sulfhydryl group of the N-terminal cysteine of a prolipoprotein, the first step in the formation of mature lipoproteins. The sequence is that of Phosphatidylglycerol--prolipoprotein diacylglyceryl transferase from Aliivibrio fischeri (strain ATCC 700601 / ES114) (Vibrio fischeri).